Here is a 508-residue protein sequence, read N- to C-terminus: Flavonoid 3',5'-hydroxylase 2 (508 aa).

C443 serves as a coordination point for heme.

This sequence belongs to the cytochrome P450 family. Heme serves as cofactor. Flowers.

Its subcellular location is the microsome. It is found in the endoplasmic reticulum. It catalyses the reaction a 3',5'-unsubstituted flavanone + 2 reduced [NADPH--hemoprotein reductase] + 2 O2 = a 3',5'-dihydroxyflavanone + 2 oxidized [NADPH--hemoprotein reductase] + 2 H2O + 2 H(+). It functions in the pathway pigment biosynthesis; anthocyanin biosynthesis. Catalyzes the 3'5'-hydroxylation of naringenin and eriodictyol to form 5,7,3,'4',5'-pentahydroxyflavanone and 3',5'-hydroxylation of dihydrokaempferol and dihydroquercetin to form dihydromyricetin. The chain is Flavonoid 3',5'-hydroxylase 2 (CYP75A3) from Petunia hybrida (Petunia).